We begin with the raw amino-acid sequence, 272 residues long: Putative hydro-lyase BRADO2538 (272 aa).

It belongs to the D-glutamate cyclase family.

The chain is Putative hydro-lyase BRADO2538 from Bradyrhizobium sp. (strain ORS 278).